We begin with the raw amino-acid sequence, 191 residues long: A-type ATP synthase subunit E (191 aa).

This sequence belongs to the V-ATPase E subunit family. In terms of assembly, has multiple subunits with at least A(3), B(3), C, D, E, F, H, I and proteolipid K(x).

The protein resides in the cell membrane. In terms of biological role, component of the A-type ATP synthase that produces ATP from ADP in the presence of a proton gradient across the membrane. The polypeptide is A-type ATP synthase subunit E (Methanoregula boonei (strain DSM 21154 / JCM 14090 / 6A8)).